Here is a 313-residue protein sequence, read N- to C-terminus: Aspartate carbamoyltransferase catalytic subunit (313 aa).

Carbamoyl phosphate contacts are provided by arginine 61 and threonine 62. Position 89 (lysine 89) interacts with L-aspartate. Residues arginine 111, histidine 139, and glutamine 142 each contribute to the carbamoyl phosphate site. L-aspartate is bound by residues arginine 172 and arginine 227. Residues glycine 268 and proline 269 each contribute to the carbamoyl phosphate site.

The protein belongs to the aspartate/ornithine carbamoyltransferase superfamily. ATCase family. Heterododecamer (2C3:3R2) of six catalytic PyrB chains organized as two trimers (C3), and six regulatory PyrI chains organized as three dimers (R2).

The catalysed reaction is carbamoyl phosphate + L-aspartate = N-carbamoyl-L-aspartate + phosphate + H(+). It functions in the pathway pyrimidine metabolism; UMP biosynthesis via de novo pathway; (S)-dihydroorotate from bicarbonate: step 2/3. In terms of biological role, catalyzes the condensation of carbamoyl phosphate and aspartate to form carbamoyl aspartate and inorganic phosphate, the committed step in the de novo pyrimidine nucleotide biosynthesis pathway. This Gluconobacter oxydans (strain 621H) (Gluconobacter suboxydans) protein is Aspartate carbamoyltransferase catalytic subunit.